A 305-amino-acid chain; its full sequence is tRNA-cytidine(32) 2-sulfurtransferase (305 aa).

The disordered stretch occupies residues Met1 to Arg20. The short motif at Ser59 to Ser64 is the PP-loop motif element. [4Fe-4S] cluster is bound by residues Cys134, Cys137, and Cys225. A compositionally biased stretch (low complexity) spans Asp282–Ala293. Positions Asp282–Asp305 are disordered.

This sequence belongs to the TtcA family. As to quaternary structure, homodimer. Mg(2+) serves as cofactor. It depends on [4Fe-4S] cluster as a cofactor.

The protein localises to the cytoplasm. It carries out the reaction cytidine(32) in tRNA + S-sulfanyl-L-cysteinyl-[cysteine desulfurase] + AH2 + ATP = 2-thiocytidine(32) in tRNA + L-cysteinyl-[cysteine desulfurase] + A + AMP + diphosphate + H(+). The protein operates within tRNA modification. Functionally, catalyzes the ATP-dependent 2-thiolation of cytidine in position 32 of tRNA, to form 2-thiocytidine (s(2)C32). The sulfur atoms are provided by the cysteine/cysteine desulfurase (IscS) system. In Xanthomonas oryzae pv. oryzae (strain MAFF 311018), this protein is tRNA-cytidine(32) 2-sulfurtransferase.